Consider the following 408-residue polypeptide: MDLRSRTDDALDMELHAGFDAPEIARAVLTEKTLTGLISSISPLVNRLRDSILIFSDEGLIIHCSLETEQLYIPIPANMFDQYNWTGPRMVVLAATEGRSSLIDAFRHTKDPSTPTRLYFKFTGQPPERSIIQTMVWQRPGDCGPDDQVQCYKQVVKRELACYTMMFPNLTPDISICLKRDQFTRLQRLLKTFGFTTCFILTATDMYIQTAGGGFISFNVSLDINGSKPTPYNLIRSITNSKRILNNVVYGSGSMREFGVLLETHSGFRSAVQNLKLTRDETCYINFYLALTNSPMVGLYIQRSAPVHSFFYATFLSPKDLKEKLTSMQLFANMESVKDEPPLKKRRNLLTKRNEKNTGNKMGGKLPETTWQEGIGIREYCVAPPVDPAGTLDYSELSRESDVICTVK.

Residues 344-353 (KKRRNLLTKR) carry the Nuclear localization signal motif.

This sequence belongs to the herpesviridae DNA polymerase processivity factor family. Interacts with the DNA polymerase catalytic subunit. Interacts with the origin-binding protein.

Its subcellular location is the host nucleus. Its function is as follows. Plays an essential role in viral DNA replication by acting as the polymerase accessory subunit. Associates with the viral polymerase to increase its processivity and forms high-affinity direct interactions with DNA. Facilitates the origin-binding protein loading onto DNA thus increasing its ability to assemble into a functional complex capable of unwinding duplex DNA. The chain is DNA polymerase processivity factor from Varicella-zoster virus (strain Dumas) (HHV-3).